The sequence spans 351 residues: Photosystem II D2 protein (351 aa).

Residues 39-59 (TSYLSIGGWFTGTTFVTSWYT) traverse the membrane as a helical segment. A chlorophyll a-binding site is contributed by histidine 116. Residues 123–139 (GFCLRQFEIARLVGIRP) form a helical membrane-spanning segment. Pheophytin a contacts are provided by glutamine 128 and asparagine 141. A helical membrane pass occupies residues 151-164 (IFVSVFLMYPLGQA). Histidine 196 serves as a coordination point for chlorophyll a. The helical transmembrane segment at 206-226 (AALLCAIHGATVQNTIFEDGD) threads the bilayer. A plastoquinone is bound by residues histidine 213 and phenylalanine 260. Histidine 213 lines the Fe cation pocket. Position 267 (histidine 267) interacts with Fe cation. A helical membrane pass occupies residues 277–293 (GLWTSAIGIVGLALNLR).

The protein belongs to the reaction center PufL/M/PsbA/D family. As to quaternary structure, PSII is composed of 1 copy each of membrane proteins PsbA, PsbB, PsbC, PsbD, PsbE, PsbF, PsbH, PsbI, PsbJ, PsbK, PsbL, PsbM, PsbT, PsbX, PsbY, PsbZ, Psb30/Ycf12, at least 3 peripheral proteins of the oxygen-evolving complex and a large number of cofactors. It forms dimeric complexes. The cofactor is The D1/D2 heterodimer binds P680, chlorophylls that are the primary electron donor of PSII, and subsequent electron acceptors. It shares a non-heme iron and each subunit binds pheophytin, quinone, additional chlorophylls, carotenoids and lipids. There is also a Cl(-1) ion associated with D1 and D2, which is required for oxygen evolution. The PSII complex binds additional chlorophylls, carotenoids and specific lipids..

Its subcellular location is the plastid. It localises to the chloroplast thylakoid membrane. It catalyses the reaction 2 a plastoquinone + 4 hnu + 2 H2O = 2 a plastoquinol + O2. Photosystem II (PSII) is a light-driven water:plastoquinone oxidoreductase that uses light energy to abstract electrons from H(2)O, generating O(2) and a proton gradient subsequently used for ATP formation. It consists of a core antenna complex that captures photons, and an electron transfer chain that converts photonic excitation into a charge separation. The D1/D2 (PsbA/PsbD) reaction center heterodimer binds P680, the primary electron donor of PSII as well as several subsequent electron acceptors. D2 is needed for assembly of a stable PSII complex. The polypeptide is Photosystem II D2 protein (Guillardia theta (Cryptophyte)).